The sequence spans 102 residues: Outer membrane protein assembly factor BamE (102 aa).

Positions 1–20 (MNNYIKALLIIICFSSCSIS) are cleaved as a signal peptide.

Belongs to the BamE family. In terms of assembly, part of the Bam complex.

It localises to the cell outer membrane. Part of the outer membrane protein assembly complex, which is involved in assembly and insertion of beta-barrel proteins into the outer membrane. The protein is Outer membrane protein assembly factor BamE of Buchnera aphidicola subsp. Acyrthosiphon pisum (strain APS) (Acyrthosiphon pisum symbiotic bacterium).